The sequence spans 314 residues: Hydroxyethylthiazole kinase (314 aa).

Met-70 contributes to the substrate binding site. ATP contacts are provided by Arg-145 and Ser-217. Position 244 (Gly-244) interacts with substrate.

The protein belongs to the Thz kinase family. Mg(2+) is required as a cofactor.

It catalyses the reaction 5-(2-hydroxyethyl)-4-methylthiazole + ATP = 4-methyl-5-(2-phosphooxyethyl)-thiazole + ADP + H(+). Its pathway is cofactor biosynthesis; thiamine diphosphate biosynthesis; 4-methyl-5-(2-phosphoethyl)-thiazole from 5-(2-hydroxyethyl)-4-methylthiazole: step 1/1. In terms of biological role, catalyzes the phosphorylation of the hydroxyl group of 4-methyl-5-beta-hydroxyethylthiazole (THZ). This chain is Hydroxyethylthiazole kinase, found in Bifidobacterium longum (strain NCC 2705).